A 103-amino-acid polypeptide reads, in one-letter code: Cell division protein FtsB (103 aa).

At 1 to 3 the chain is on the cytoplasmic side; that stretch reads MGK. Residues 4 to 21 form a helical membrane-spanning segment; sequence LTLLLLAILVWLQYSLWF. Topologically, residues 22 to 103 are periplasmic; sequence GKNGIHDYTR…RAQSAGQNNR (82 aa). A coiled-coil region spans residues 31-71; that stretch reads RVNNDVAAQQATNAKLKARNDQLFAEIDDLNGGQEALEERA.

Belongs to the FtsB family. In terms of assembly, part of a complex composed of FtsB, FtsL and FtsQ.

It localises to the cell inner membrane. In terms of biological role, essential cell division protein. May link together the upstream cell division proteins, which are predominantly cytoplasmic, with the downstream cell division proteins, which are predominantly periplasmic. The sequence is that of Cell division protein FtsB from Escherichia coli O81 (strain ED1a).